The following is a 691-amino-acid chain: Pleckstrin homology domain-containing family G member 7 (691 aa).

Disordered regions lie at residues 1 to 48 (MEKT…ISTS) and 109 to 140 (TSEP…LQPV). The DH domain occupies 313-488 (MIFMNTLRYL…EGKVKWLDNF (176 aa)). N395 carries N-linked (GlcNAc...) asparagine glycosylation. One can recognise a PH domain in the interval 535–668 (HLLYEGKLTL…WMAQITTAIS (134 aa)).

The polypeptide is Pleckstrin homology domain-containing family G member 7 (Homo sapiens (Human)).